Here is a 116-residue protein sequence, read N- to C-terminus: Diuretic hormone class 2 (116 aa).

The signal sequence occupies residues 1 to 25 (MTNRCACFALAFLLFCLLAISSIEA). The propeptide occupies 26–75 (APMPSQSNGGYGGAGYNELEEVPDDLLMELMTRFGRTIIRARNDLENSKR). Pro-106 carries the proline amide modification. Positions 112-116 (SETDV) are excised as a propeptide.

It localises to the secreted. Its function is as follows. Regulation of fluid secretion. Stimulates Malpighian tubules fluid secretion by activating the apical membrane V-ATPase via cyclic AMP of principal cells in the main secretory segment. The protein is Diuretic hormone class 2 (Dh31) of Drosophila melanogaster (Fruit fly).